A 236-amino-acid chain; its full sequence is Sugar fermentation stimulation protein homolog (236 aa).

Belongs to the SfsA family.

The chain is Sugar fermentation stimulation protein homolog from Pseudomonas fluorescens (strain SBW25).